The primary structure comprises 122 residues: Glycine cleavage system H protein (122 aa).

A Lipoyl-binding domain is found at 19–101; it reads TATIGITKHA…EGNSWLYKIK (83 aa). N6-lipoyllysine is present on lysine 60.

The protein belongs to the GcvH family. As to quaternary structure, the glycine cleavage system is composed of four proteins: P, T, L and H. It depends on (R)-lipoate as a cofactor.

Its function is as follows. The glycine cleavage system catalyzes the degradation of glycine. The H protein shuttles the methylamine group of glycine from the P protein to the T protein. The polypeptide is Glycine cleavage system H protein (Dinoroseobacter shibae (strain DSM 16493 / NCIMB 14021 / DFL 12)).